Consider the following 495-residue polypeptide: Glycerol kinase (495 aa).

Thr-12 is an ADP binding site. Thr-12, Thr-13, and Ser-14 together coordinate ATP. Thr-12 lines the sn-glycerol 3-phosphate pocket. Arg-16 is an ADP binding site. Residues Arg-82, Glu-83, Tyr-134, and Asp-243 each coordinate sn-glycerol 3-phosphate. Glycerol contacts are provided by Arg-82, Glu-83, Tyr-134, Asp-243, and Gln-244. ADP contacts are provided by Thr-265 and Gly-308. ATP contacts are provided by Thr-265, Gly-308, Gln-312, and Gly-409. 2 residues coordinate ADP: Gly-409 and Asn-413.

Belongs to the FGGY kinase family.

It carries out the reaction glycerol + ATP = sn-glycerol 3-phosphate + ADP + H(+). It participates in polyol metabolism; glycerol degradation via glycerol kinase pathway; sn-glycerol 3-phosphate from glycerol: step 1/1. With respect to regulation, inhibited by fructose 1,6-bisphosphate (FBP). Key enzyme in the regulation of glycerol uptake and metabolism. Catalyzes the phosphorylation of glycerol to yield sn-glycerol 3-phosphate. This Ectopseudomonas mendocina (strain ymp) (Pseudomonas mendocina) protein is Glycerol kinase.